The following is a 449-amino-acid chain: Alginate biosynthesis transcriptional regulatory protein AlgB (449 aa).

Residues 10 to 124 (RILLVDDESA…QLRLAAAKQL (115 aa)) form the Response regulatory domain. D59 carries the 4-aspartylphosphate modification. The 230-residue stretch at 147 to 376 (LESHSPAMAA…LRNVIERASI (230 aa)) folds into the Sigma-54 factor interaction domain. Residues 175–182 (GESGSGKG) and 238–247 (ADGGTLFLDE) each bind ATP. Positions 426–445 (LDQAAKTLGIDASTLYRKRK) form a DNA-binding region, H-T-H motif.

Post-translationally, phosphorylated by KinB.

It participates in glycan biosynthesis; alginate biosynthesis [regulation]. In terms of biological role, member of the two-component regulatory system AlgB/KinB involved in regulation of alginate biosynthesis genes. Positive regulator of the alginate biosynthetic gene AlgD. This is Alginate biosynthesis transcriptional regulatory protein AlgB (algB) from Pseudomonas aeruginosa (strain ATCC 15692 / DSM 22644 / CIP 104116 / JCM 14847 / LMG 12228 / 1C / PRS 101 / PAO1).